We begin with the raw amino-acid sequence, 322 residues long: Methionyl-tRNA formyltransferase (322 aa).

(6S)-5,6,7,8-tetrahydrofolate is bound at residue 115-118 (SLLP).

This sequence belongs to the Fmt family.

It carries out the reaction L-methionyl-tRNA(fMet) + (6R)-10-formyltetrahydrofolate = N-formyl-L-methionyl-tRNA(fMet) + (6S)-5,6,7,8-tetrahydrofolate + H(+). Its function is as follows. Attaches a formyl group to the free amino group of methionyl-tRNA(fMet). The formyl group appears to play a dual role in the initiator identity of N-formylmethionyl-tRNA by promoting its recognition by IF2 and preventing the misappropriation of this tRNA by the elongation apparatus. The chain is Methionyl-tRNA formyltransferase from Treponema denticola (strain ATCC 35405 / DSM 14222 / CIP 103919 / JCM 8153 / KCTC 15104).